A 240-amino-acid chain; its full sequence is Probable septum site-determining protein MinC (240 aa).

It belongs to the MinC family. Interacts with MinD and FtsZ.

Its function is as follows. Cell division inhibitor that blocks the formation of polar Z ring septums. Rapidly oscillates between the poles of the cell to destabilize FtsZ filaments that have formed before they mature into polar Z rings. Prevents FtsZ polymerization. This chain is Probable septum site-determining protein MinC, found in Buchnera aphidicola subsp. Cinara cedri (strain Cc).